The sequence spans 311 residues: Ornithine carbamoyltransferase (311 aa).

Carbamoyl phosphate contacts are provided by residues 54-57 (STRT), glutamine 81, arginine 105, and 132-135 (HPCQ). L-ornithine-binding positions include asparagine 163, aspartate 221, and 225-226 (SM). Carbamoyl phosphate-binding positions include 261–262 (CL) and arginine 289.

This sequence belongs to the aspartate/ornithine carbamoyltransferase superfamily. OTCase family.

The protein localises to the cytoplasm. The catalysed reaction is carbamoyl phosphate + L-ornithine = L-citrulline + phosphate + H(+). It functions in the pathway amino-acid degradation; L-arginine degradation via ADI pathway; carbamoyl phosphate from L-arginine: step 2/2. Functionally, reversibly catalyzes the transfer of the carbamoyl group from carbamoyl phosphate (CP) to the N(epsilon) atom of ornithine (ORN) to produce L-citrulline. The sequence is that of Ornithine carbamoyltransferase from Azoarcus sp. (strain BH72).